Reading from the N-terminus, the 206-residue chain is Ephrin-A4 (206 aa).

A signal peptide spans 1 to 25 (MRLLPLLRTVLWAALLGSRLPGCSS). The Ephrin RBD domain occupies 26–158 (LRHPIYWNSS…RLQVSVCCKE (133 aa)). A glycan (N-linked (GlcNAc...) asparagine) is linked at asparagine 33. A Cell attachment site motif is present at residues 41 to 43 (RGD). Intrachain disulfides connect cysteine 58–cysteine 99 and cysteine 86–cysteine 147. N-linked (GlcNAc...) asparagine glycosylation is present at asparagine 98. The disordered stretch occupies residues 161 to 180 (SSHESAHPVGSPGESGTSGW). A lipid anchor (GPI-anchor amidated serine) is attached at serine 175. Residues 176–206 (GTSGWRGGHAPSPLCLLLLLLLPILRLLRVL) constitute a propeptide, removed in mature form.

The protein belongs to the ephrin family. As to expression, expressed in myogenic progenitor cells.

Its subcellular location is the cell membrane. In terms of biological role, cell surface GPI-bound ligand for Eph receptors, a family of receptor tyrosine kinases which are crucial for migration, repulsion and adhesion during neuronal, vascular and epithelial development. Binds promiscuously Eph receptors residing on adjacent cells, leading to contact-dependent bidirectional signaling into neighboring cells. May play a role in the interaction between activated B-lymphocytes and dendritic cells in tonsils. The protein is Ephrin-A4 (Efna4) of Mus musculus (Mouse).